The sequence spans 530 residues: Estrogen receptor beta (530 aa).

Residues 1 to 148 (MDIKNSPSSL…GPSSKRDAHF (148 aa)) form a modulating region. Serine 61 is modified (phosphoserine; alternate). Residue serine 61 is glycosylated (O-linked (GlcNAc) serine; alternate). 2 positions are modified to phosphoserine; by MAPK: serine 87 and serine 105. NR C4-type zinc fingers lie at residues 149–169 (CAVC…CEGC) and 185–209 (CPAT…LRKC). Positions 149 to 214 (CAVCSDYASG…RLRKCYEVGM (66 aa)) form a DNA-binding region, nuclear receptor. The NR LBD domain maps to 264 to 498 (SPEQLVLTLL…DLLLEMMNAH (235 aa)). The segment at 507 to 530 (ITGSECSPAEDSKSTEGSQNPQSP) is disordered. The span at 521-530 (TEGSQNPQSP) shows a compositional bias: polar residues.

The protein belongs to the nuclear hormone receptor family. NR3 subfamily. As to quaternary structure, binds DNA as a homodimer. Can form a heterodimer with ESR1. Interacts with NCOA1, NCOA3, NCOA5 and NCOA6 coactivators, leading to a strong increase of transcription of target genes. Interacts with UBE1C and AKAP13. Interacts with DNTTIP2. Interacts with CCDC62 in the presence of estradiol/E2; this interaction seems to enhance the transcription of target genes. Interacts with DNAAF4. Interacts with PRMT2. Interacts with CCAR2 (via N-terminus) in a ligand-independent manner. Interacts with RBM39, in the presence of estradiol (E2). Interacts with STUB1/CHIP. In terms of processing, phosphorylation at Ser-87 and Ser-105 recruits NCOA1.

It localises to the nucleus. In terms of biological role, nuclear hormone receptor. Binds estrogens with an affinity similar to that of ESR1/ER-alpha, and activates expression of reporter genes containing estrogen response elements (ERE) in an estrogen-dependent manner. The sequence is that of Estrogen receptor beta (ESR2) from Callithrix jacchus (White-tufted-ear marmoset).